Consider the following 148-residue polypeptide: Deoxyuridine 5'-triphosphate nucleotidohydrolase (148 aa).

Residues S69, G82, D85, Y88, R137, F142, and G143 each contribute to the dUMP site.

Belongs to the dUTPase family. Homotrimer. Requires Mg(2+) as cofactor.

It catalyses the reaction dUTP + H2O = dUMP + diphosphate + H(+). Its pathway is pyrimidine metabolism; dUMP biosynthesis; dUMP from dCTP (dUTP route): step 2/2. Its function is as follows. Involved in nucleotide metabolism via production of dUMP, the immediate precursor of thymidine nucleotides, and decreases the intracellular concentration of dUTP so that uracil cannot be incorporated into DNA. This chain is Deoxyuridine 5'-triphosphate nucleotidohydrolase (DUT1), found in Kluyveromyces lactis (strain ATCC 8585 / CBS 2359 / DSM 70799 / NBRC 1267 / NRRL Y-1140 / WM37) (Yeast).